Consider the following 443-residue polypeptide: Methyl-coenzyme M reductase II subunit beta (443 aa).

Coenzyme M is bound at residue tyrosine 367. Coenzyme B is bound at residue glycine 369.

It belongs to the methyl-coenzyme M reductase beta subunit family. MCR is a hexamer of two alpha, two beta, and two gamma chains, forming a dimer of heterotrimers. Coenzyme F430 serves as cofactor.

The enzyme catalyses coenzyme B + methyl-coenzyme M = methane + coenzyme M-coenzyme B heterodisulfide. Its pathway is one-carbon metabolism; methyl-coenzyme M reduction; methane from methyl-coenzyme M: step 1/1. Its function is as follows. Component of the methyl-coenzyme M reductase (MCR) I that catalyzes the reductive cleavage of methyl-coenzyme M (CoM-S-CH3 or 2-(methylthio)ethanesulfonate) using coenzyme B (CoB or 7-mercaptoheptanoylthreonine phosphate) as reductant which results in the production of methane and the mixed heterodisulfide of CoB and CoM (CoM-S-S-CoB). This is the final step in methanogenesis. This Methanothermus fervidus (strain ATCC 43054 / DSM 2088 / JCM 10308 / V24 S) protein is Methyl-coenzyme M reductase II subunit beta (mrtB).